The chain runs to 307 residues: UDP-N-acetylenolpyruvoylglucosamine reductase (307 aa).

The FAD-binding PCMH-type domain occupies 33–198 (KVGGPADIFV…LNATFALQKG (166 aa)). Arg177 is an active-site residue. Catalysis depends on Ser227, which acts as the Proton donor. Residue Glu297 is part of the active site.

The protein belongs to the MurB family. The cofactor is FAD.

The protein resides in the cytoplasm. The enzyme catalyses UDP-N-acetyl-alpha-D-muramate + NADP(+) = UDP-N-acetyl-3-O-(1-carboxyvinyl)-alpha-D-glucosamine + NADPH + H(+). The protein operates within cell wall biogenesis; peptidoglycan biosynthesis. Cell wall formation. This Clostridium novyi (strain NT) protein is UDP-N-acetylenolpyruvoylglucosamine reductase.